The chain runs to 204 residues: Urease accessory protein UreG (204 aa).

12–19 (GPVGSGKT) serves as a coordination point for GTP.

It belongs to the SIMIBI class G3E GTPase family. UreG subfamily. As to quaternary structure, homodimer. UreD, UreF and UreG form a complex that acts as a GTP-hydrolysis-dependent molecular chaperone, activating the urease apoprotein by helping to assemble the nickel containing metallocenter of UreC. The UreE protein probably delivers the nickel.

It is found in the cytoplasm. In terms of biological role, facilitates the functional incorporation of the urease nickel metallocenter. This process requires GTP hydrolysis, probably effectuated by UreG. The sequence is that of Urease accessory protein UreG from Azotobacter vinelandii (strain DJ / ATCC BAA-1303).